Here is a 236-residue protein sequence, read N- to C-terminus: Large ribosomal subunit protein uL1 (236 aa).

The protein belongs to the universal ribosomal protein uL1 family. In terms of assembly, part of the 50S ribosomal subunit.

Its function is as follows. Binds directly to 23S rRNA. The L1 stalk is quite mobile in the ribosome, and is involved in E site tRNA release. Protein L1 is also a translational repressor protein, it controls the translation of the L11 operon by binding to its mRNA. The polypeptide is Large ribosomal subunit protein uL1 (Corynebacterium jeikeium (strain K411)).